Consider the following 310-residue polypeptide: MALSRRLRLRLYARLPDFFLLLLFRGCMIEAVNLKSSNRNPVVHEFESVELSCIITDSQTSDPRIEWKKIQDGQTTYVYFDNKIQGDLAGRTDVFGKTSLRIWNVTRSDSAIYRCEVVALNDRKEVDEITIELIVQVKPVTPVCRIPAAVPVGKTATLQCQESEGYPRPHYSWYRNDVPLPTDSRANPRFQNSSFHVNSETGTLVFNAVHKDDSGQYYCIASNDAGAARCEGQDMEVYDLNIAGIIGGVLVVLIVLAVITMGICCAYRRGCFISSKQDGESYKSPGKHDGVNYIRTSEEGDFRHKSSFVI.

Positions 1–29 are cleaved as a signal peptide; sequence MALSRRLRLRLYARLPDFFLLLLFRGCMI. Topologically, residues 30–241 are extracellular; the sequence is EAVNLKSSNR…GQDMEVYDLN (212 aa). Positions 35–127 constitute an Ig-like V-type domain; it reads KSSNRNPVVH…VALNDRKEVD (93 aa). Intrachain disulfides connect C53–C115 and C160–C219. N-linked (GlcNAc...) asparagine glycans are attached at residues N104 and N192. Residues 139–236 enclose the Ig-like C2-type domain; the sequence is PVTPVCRIPA…AARCEGQDME (98 aa). The chain crosses the membrane as a helical span at residues 242–262; the sequence is IAGIIGGVLVVLIVLAVITMG. Topologically, residues 263-310 are cytoplasmic; the sequence is ICCAYRRGCFISSKQDGESYKSPGKHDGVNYIRTSEEGDFRHKSSFVI. 2 S-palmitoyl cysteine lipidation sites follow: C264 and C265.

This sequence belongs to the immunoglobulin superfamily. As to quaternary structure, interacts with ITGAM. Interacts with GORASP2. Post-translationally, proteolytically cleaved from endothelial cells surface into a soluble form by ADAM10 and ADAM17; the release of soluble JAM3 is increased by pro-inflammatory factors. N-glycosylated. In terms of processing, S-palmitoylated by ZDHHC7. S-palmitoylation promotes expression at tight junctions. In terms of tissue distribution, colocalizes with Jam2 near the lumen of seminiferous tubulues. Detected at junctional plaques that correspond to cell-cell contacts between spermatids and Sertoli cells. Detected on endothelial cells, in brain vessels and kidney glomeruli (at protein level). Detected in heart, lung, liver, kidney, testis, thymus, lymph node and Peyer patch. Endothelial cells.

It localises to the cell membrane. The protein localises to the cell junction. The protein resides in the desmosome. It is found in the tight junction. Its subcellular location is the secreted. Its function is as follows. Junctional adhesion protein that mediates heterotypic cell-cell interactions with its cognate receptor JAM2 to regulate different cellular processes. Plays a role in homing and mobilization of hematopoietic stem and progenitor cells within the bone marrow. At the surface of bone marrow stromal cells, it contributes to the retention of the hematopoietic stem and progenitor cells expressing JAM3. Plays a central role in leukocytes extravasation by facilitating transmigration through the endothelium. Plays a role in spermatogenesis where JAM2 and JAM3, which are respectively expressed by Sertoli and germ cells, mediate an interaction between both cell types and play an essential role in the anchorage of germ cells onto Sertoli cells and the assembly of cell polarity complexes during spermatid differentiation. Also functions as a counter-receptor for ITGAM, mediating leukocyte-platelet interactions and is involved in the regulation of transepithelial migration of polymorphonuclear neutrophils (PMN). Plays a role in angiogenesis. Plays a role in the regulation of cell migration. During myogenesis, it is involved in myocyte fusion. Functionally, promotes chemotaxis of vascular endothelial cells and stimulates angiogenesis. The protein is Junctional adhesion molecule C (Jam3) of Mus musculus (Mouse).